Reading from the N-terminus, the 261-residue chain is Ribosomal RNA small subunit methyltransferase A (261 aa).

S-adenosyl-L-methionine is bound by residues H12, L14, G39, E60, D81, and N104.

This sequence belongs to the class I-like SAM-binding methyltransferase superfamily. rRNA adenine N(6)-methyltransferase family. RsmA subfamily.

The protein localises to the cytoplasm. The catalysed reaction is adenosine(1518)/adenosine(1519) in 16S rRNA + 4 S-adenosyl-L-methionine = N(6)-dimethyladenosine(1518)/N(6)-dimethyladenosine(1519) in 16S rRNA + 4 S-adenosyl-L-homocysteine + 4 H(+). In terms of biological role, specifically dimethylates two adjacent adenosines (A1518 and A1519) in the loop of a conserved hairpin near the 3'-end of 16S rRNA in the 30S particle. May play a critical role in biogenesis of 30S subunits. The protein is Ribosomal RNA small subunit methyltransferase A of Albidiferax ferrireducens (strain ATCC BAA-621 / DSM 15236 / T118) (Rhodoferax ferrireducens).